The chain runs to 398 residues: Pheromone receptor transcription activator (398 aa).

Disordered regions lie at residues 1–30 (MMDERKLSNFQIDGEKAYTGSSQGNSYLED), 101–125 (TDQNESQASQAKQSSAQLSDSESGY), and 254–317 (PSTG…DRPP). Positions 20 to 74 (GSSQGNSYLEDRQKRQNTFTKRKAGIFKKANELALLTGSEVMVLVVSETGLVHTF) constitute an MADS-box domain. Residues 106-121 (SQASQAKQSSAQLSDS) show a composition bias toward low complexity. Polar residues-rich tracts occupy residues 262-273 (TTGQHSVNSPPS) and 282-294 (NKSFATRSEPQTP).

The protein localises to the nucleus. In terms of biological role, in response to mating-pheromone signaling or nitrogen starvation, it interacts with mat1-Pc. This activates the expression of one of two mating-type-specific genes sxa2 or map3, which leads to inactivation of the P-factor. May also interact with mat1-Mc. The sequence is that of Pheromone receptor transcription activator (map1) from Schizosaccharomyces pombe (strain 972 / ATCC 24843) (Fission yeast).